The sequence spans 400 residues: Argininosuccinate synthase (400 aa).

Residues 11–19 and Ala38 each bind ATP; that span reads AYSGGLDTS. L-citrulline-binding residues include Tyr89 and Ser94. ATP is bound at residue Gly119. Residues Thr121, Asn125, and Asp126 each contribute to the L-aspartate site. Asn125 serves as a coordination point for L-citrulline. L-citrulline-binding residues include Arg129, Ser178, Ser187, Glu263, and Tyr275.

It belongs to the argininosuccinate synthase family. Type 1 subfamily. In terms of assembly, homotetramer.

Its subcellular location is the cytoplasm. The catalysed reaction is L-citrulline + L-aspartate + ATP = 2-(N(omega)-L-arginino)succinate + AMP + diphosphate + H(+). It functions in the pathway amino-acid biosynthesis; L-arginine biosynthesis; L-arginine from L-ornithine and carbamoyl phosphate: step 2/3. In Desulfatibacillum aliphaticivorans, this protein is Argininosuccinate synthase.